A 259-amino-acid polypeptide reads, in one-letter code: Ribonuclease HII (259 aa).

The segment at 1-26 (MLSTPPKLPSAHGPVHFPRRSGTGMN) is disordered. An RNase H type-2 domain is found at 55-243 (APVAGADEAG…VRAQQLVLFE (189 aa)). Residues D61, E62, and D152 each coordinate a divalent metal cation.

The protein belongs to the RNase HII family. It depends on Mn(2+) as a cofactor. Mg(2+) is required as a cofactor.

The protein localises to the cytoplasm. It catalyses the reaction Endonucleolytic cleavage to 5'-phosphomonoester.. Endonuclease that specifically degrades the RNA of RNA-DNA hybrids. In Azorhizobium caulinodans (strain ATCC 43989 / DSM 5975 / JCM 20966 / LMG 6465 / NBRC 14845 / NCIMB 13405 / ORS 571), this protein is Ribonuclease HII.